Consider the following 338-residue polypeptide: tRNA N6-adenosine threonylcarbamoyltransferase (338 aa).

The Fe cation site is built by His-110 and His-114. Substrate-binding positions include 132-136 (VLSGG), Asp-165, Gly-178, and Asn-274. Asp-298 is a binding site for Fe cation.

It belongs to the KAE1 / TsaD family. It depends on Fe(2+) as a cofactor.

Its subcellular location is the cytoplasm. The enzyme catalyses L-threonylcarbamoyladenylate + adenosine(37) in tRNA = N(6)-L-threonylcarbamoyladenosine(37) in tRNA + AMP + H(+). In terms of biological role, required for the formation of a threonylcarbamoyl group on adenosine at position 37 (t(6)A37) in tRNAs that read codons beginning with adenine. Is involved in the transfer of the threonylcarbamoyl moiety of threonylcarbamoyl-AMP (TC-AMP) to the N6 group of A37, together with TsaE and TsaB. TsaD likely plays a direct catalytic role in this reaction. The sequence is that of tRNA N6-adenosine threonylcarbamoyltransferase from Borrelia recurrentis (strain A1).